The chain runs to 243 residues: CR(VI) reductase (243 aa).

Belongs to the flavin oxidoreductase frp family. It depends on FMN as a cofactor.

This is CR(VI) reductase (chrR) from Pseudomonas sp. (strain G-1).